A 117-amino-acid polypeptide reads, in one-letter code: Immunoglobulin heavy variable 3-5 (117 aa).

The signal sequence occupies residues 1–18; it reads MKMFTLLYLLTVVPGILS. An Ig-like domain is found at 19–117; it reads DVQLQESGPG…EDTATYYCAR (99 aa). An intrachain disulfide couples Cys-40 to Cys-115.

The chain is Immunoglobulin heavy variable 3-5 from Mus musculus (Mouse).